The sequence spans 168 residues: Crossover junction endodeoxyribonuclease RuvC (168 aa).

Residues Asp8, Glu68, and Asp140 contribute to the active site. The Mg(2+) site is built by Asp8, Glu68, and Asp140.

It belongs to the RuvC family. In terms of assembly, homodimer which binds Holliday junction (HJ) DNA. The HJ becomes 2-fold symmetrical on binding to RuvC with unstacked arms; it has a different conformation from HJ DNA in complex with RuvA. In the full resolvosome a probable DNA-RuvA(4)-RuvB(12)-RuvC(2) complex forms which resolves the HJ. Requires Mg(2+) as cofactor.

It is found in the cytoplasm. The enzyme catalyses Endonucleolytic cleavage at a junction such as a reciprocal single-stranded crossover between two homologous DNA duplexes (Holliday junction).. Its function is as follows. The RuvA-RuvB-RuvC complex processes Holliday junction (HJ) DNA during genetic recombination and DNA repair. Endonuclease that resolves HJ intermediates. Cleaves cruciform DNA by making single-stranded nicks across the HJ at symmetrical positions within the homologous arms, yielding a 5'-phosphate and a 3'-hydroxyl group; requires a central core of homology in the junction. The consensus cleavage sequence is 5'-(A/T)TT(C/G)-3'. Cleavage occurs on the 3'-side of the TT dinucleotide at the point of strand exchange. HJ branch migration catalyzed by RuvA-RuvB allows RuvC to scan DNA until it finds its consensus sequence, where it cleaves and resolves the cruciform DNA. The polypeptide is Crossover junction endodeoxyribonuclease RuvC (Gluconobacter oxydans (strain 621H) (Gluconobacter suboxydans)).